The primary structure comprises 987 residues: Nuclear matrix constituent protein 1b (987 aa).

Residues 1-25 (MASPRSAGGVGGGGGGGGGSGGAAA) form a disordered region. Residues 8 to 24 (GGVGGGGGGGGGSGGAA) show a composition bias toward gly residues. Coiled-coil stretches lie at residues 403–545 (LAEL…ERRA) and 594–717 (LSKI…DREA). Composition is skewed to basic and acidic residues over residues 752 to 764 (SDIN…HDNS) and 898 to 908 (CKEHEYGDKGP). 2 disordered regions span residues 752–775 (SDIN…FGRK) and 887–987 (HDEA…FLIT). Residues 944 to 954 (ATVSATETSNV) are compositionally biased toward polar residues. Acidic residues predominate over residues 956-973 (GPEDNNDSDEEDEEEEEE).

This sequence belongs to the CRWN family. In terms of assembly, interacts with SWI3C.

It is found in the nucleus matrix. The protein localises to the nucleus lamina. Architectural component of nuclear structure that plays different roles in controlling nuclear size and morphology. Involved in the modification of chromatin accessibility by interacting with SWI3C, a component of the chromatin-remodeling complex, to thus reduce the suppression effect of the complex. Acts as positive regulator of drought resistance and modulates root growth. Positively regulates the expression of genes related to root growth and drought resistance. The sequence is that of Nuclear matrix constituent protein 1b from Oryza sativa subsp. japonica (Rice).